The following is a 475-amino-acid chain: Mitochondrial adenyl nucleotide antiporter SLC25A24 (475 aa).

The regulatory N-terminal domain stretch occupies residues 1-173; sequence MLRWLRAFVL…RFWKHSTGID (173 aa). The Mitochondrial intermembrane segment spans residues 1-197; it reads MLRWLRAFVL…EKKSGQWWRQ (197 aa). 4 EF-hand domains span residues 19–54, 55–88, 86–121, and 122–157; these read EPPT…LGIP, LGQD…KDHE, DHEK…LGLH, and ISEK…NPVT. Residues aspartate 32, asparagine 34, aspartate 36, valine 38, glutamate 43, aspartate 68, asparagine 70, aspartate 72, lysine 74, glutamate 79, aspartate 99, asparagine 101, aspartate 103, lysine 105, glutamate 110, aspartate 135, aspartate 137, threonine 139, threonine 141, and glutamate 146 each contribute to the Ca(2+) site. The tract at residues 159-168 is linker region; it reads IEEIIRFWKH. The C-terminal transmembrane transporter domain stretch occupies residues 174-475; sequence IGDSLTIPDE…MKQTLGVAQK (302 aa). Solcar repeat units lie at residues 192 to 276, 284 to 369, and 381 to 469; these read GQWW…YKKL, LGTF…LKSY, and PGVM…MKQT. Residues 198–215 traverse the membrane as a helical segment; sequence LLAGGVAGAVSRTSTAPL. Residues 216–250 are Mitochondrial matrix-facing; that stretch reads DRLKVMMQVHGSKSMNIFGGFRQMVKEGGIRSLWR. Residues 251-270 form a helical membrane-spanning segment; it reads GNGTNVIKIAPETAVKFWAY. The Mitochondrial intermembrane portion of the chain corresponds to 271 to 293; sequence EQYKKLLTEEGQKLGTFERFISG. A helical transmembrane segment spans residues 294–307; the sequence is SMAGATAQTFIYPM. The Mitochondrial matrix portion of the chain corresponds to 308–343; that stretch reads EVLKTRLAVAKTGQYSGIYGCAKKILKHEGFGAFYK. Lysine 318 carries the post-translational modification N6-acetyllysine; alternate. Position 318 is an N6-succinyllysine; alternate (lysine 318). The residue at position 334 (lysine 334) is an N6-acetyllysine. A helical transmembrane segment spans residues 344–363; sequence GYIPNLLGIIPYAGIDLAVY. Over 364–386 the chain is Mitochondrial intermembrane; sequence ELLKSYWLDNFAKDSVNPGVMVL. Residues 387–404 form a helical membrane-spanning segment; sequence LSCGALSSTCGQLASYPL. Residues 405–443 lie on the Mitochondrial matrix side of the membrane; the sequence is ALVRTRMQAQATVEGAPQLSMVGLFQRIVSKEGVSGLYR. Lysine 435 bears the N6-acetyllysine; alternate mark. An N6-succinyllysine; alternate modification is found at lysine 435. A helical membrane pass occupies residues 444–463; it reads GITPNFMKVLPAVGISYVVY. Residues 464–475 lie on the Mitochondrial intermembrane side of the membrane; the sequence is ENMKQTLGVAQK.

The protein belongs to the mitochondrial carrier (TC 2.A.29) family. Monomer.

It is found in the mitochondrion inner membrane. It catalyses the reaction Mg(2+)(out) + phosphate(in) + ATP(out) = Mg(2+)(in) + phosphate(out) + ATP(in). It carries out the reaction ADP(out) + phosphate(in) + H(+)(out) = ADP(in) + phosphate(out) + H(+)(in). The enzyme catalyses AMP(out) + phosphate(in) = AMP(in) + phosphate(out). The catalysed reaction is phosphate(in) + ATP(out) + 2 H(+)(out) = phosphate(out) + ATP(in) + 2 H(+)(in). It catalyses the reaction dADP(in) + ADP(out) = dADP(out) + ADP(in). It carries out the reaction Mg(2+)(in) + ADP(out) + ATP(in) + H(+)(out) = Mg(2+)(out) + ADP(in) + ATP(out) + H(+)(in). The enzyme catalyses ADP(out) + diphosphate(in) = ADP(in) + diphosphate(out). The catalysed reaction is dAMP(in) + ADP(out) + H(+)(out) = dAMP(out) + ADP(in) + H(+)(in). It catalyses the reaction 3'-AMP(in) + ADP(out) + H(+)(out) = 3'-AMP(out) + ADP(in) + H(+)(in). It carries out the reaction dAMP(out) + phosphate(in) = dAMP(in) + phosphate(out). The enzyme catalyses 3'-AMP(out) + phosphate(in) = 3'-AMP(in) + phosphate(out). The catalysed reaction is dADP(out) + phosphate(in) + H(+)(out) = dADP(in) + phosphate(out) + H(+)(in). Its activity is regulated as follows. Activated by an increase in cytosolic calcium levels that induce a conformational change of the N-terminal regulatory domain, uncapping the channel and allowing transport. Inhibited by bathophenanthroline, mersalyl, p-hydroxymercuribenzoate, bromcresol purple and tannic acid. Functionally, electroneutral antiporter that mediates the transport of adenyl nucleotides through the inner mitochondrial membrane. Originally identified as an ATP-magnesium/inorganic phosphate antiporter, it also acts as a broad specificity adenyl nucleotide antiporter. By regulating the mitochondrial matrix adenyl nucleotide pool could adapt to changing cellular energetic demands and indirectly regulate adenyl nucleotide-dependent metabolic pathways. In vitro, a low activity is also observed with guanyl and pyrimidine nucleotides. May play a role in protecting cells against oxidative stress-induced cell death, by buffering calcium levels in the mitochondrial matrix through the formation of calcium-phosphate precipitates. The polypeptide is Mitochondrial adenyl nucleotide antiporter SLC25A24 (Mus musculus (Mouse)).